Consider the following 107-residue polypeptide: Integration host factor subunit beta (107 aa).

The interval 56-107 (RPSRVGRNPKSGEKVLVPEKHVPHFKPGKELRERVDRNAGEPLKADAADDDL) is disordered. A compositionally biased stretch (basic and acidic residues) spans 65–107 (KSGEKVLVPEKHVPHFKPGKELRERVDRNAGEPLKADAADDDL).

Belongs to the bacterial histone-like protein family. Heterodimer of an alpha and a beta chain.

This protein is one of the two subunits of integration host factor, a specific DNA-binding protein that functions in genetic recombination as well as in transcriptional and translational control. The protein is Integration host factor subunit beta of Paraburkholderia phymatum (strain DSM 17167 / CIP 108236 / LMG 21445 / STM815) (Burkholderia phymatum).